The sequence spans 77 residues: Conotoxin S6.11 (77 aa).

Residues 1 to 19 (MEKLTILLLVAAVLMSTQA) form the signal peptide. A propeptide spanning residues 20 to 50 (LIQGGLDERQKAKSNFFSKRKSNAESWWEGE) is cleaved from the precursor. 3 disulfide bridges follow: Cys51–Cys65, Cys58–Cys69, and Cys64–Cys74.

Belongs to the conotoxin O2 superfamily. Expressed by the venom duct.

The protein localises to the secreted. In Conus striatus (Striated cone), this protein is Conotoxin S6.11.